We begin with the raw amino-acid sequence, 251 residues long: Vacuolar protein sorting-associated protein 37D (251 aa).

Residues 93 to 182 (AENCADKLQR…RRRERSAQPA (90 aa)) enclose the VPS37 C-terminal domain. A disordered region spans residues 174 to 251 (RRERSAQPAP…RPSQPEPPHR (78 aa)). The segment covering 221-251 (PVPPLKGSPGCPLGPAPLLSPRPSQPEPPHR) has biased composition (pro residues).

This sequence belongs to the VPS37 family. As to quaternary structure, component of the ESCRT-I complex (endosomal sorting complex required for transport I) which consists of TSG101, VPS28, a VPS37 protein (VPS37A to -D) and MVB12A or MVB12B in a 1:1:1:1 stoichiometry. Interacts with TSG101 and MVB12A. Component of the ESCRT-I complex (endosomal sorting complex required for transport I) which consists of TSG101, VPS28, a VPS37 protein (VPS37A to -D) and UBAP1 in a 1:1:1:1 stoichiometry.

The protein resides in the late endosome membrane. Functionally, component of the ESCRT-I complex, a regulator of vesicular trafficking process. Required for the sorting of endocytic ubiquitinated cargos into multivesicular bodies. May be involved in cell growth and differentiation. This chain is Vacuolar protein sorting-associated protein 37D, found in Homo sapiens (Human).